A 513-amino-acid polypeptide reads, in one-letter code: Glutamyl-tRNA(Gln) amidotransferase subunit A (513 aa).

Catalysis depends on charge relay system residues lysine 85 and serine 160. Residue serine 184 is the Acyl-ester intermediate of the active site.

It belongs to the amidase family. GatA subfamily. Heterotrimer of A, B and C subunits.

It carries out the reaction L-glutamyl-tRNA(Gln) + L-glutamine + ATP + H2O = L-glutaminyl-tRNA(Gln) + L-glutamate + ADP + phosphate + H(+). Functionally, allows the formation of correctly charged Gln-tRNA(Gln) through the transamidation of misacylated Glu-tRNA(Gln) in organisms which lack glutaminyl-tRNA synthetase. The reaction takes place in the presence of glutamine and ATP through an activated gamma-phospho-Glu-tRNA(Gln). In Bifidobacterium longum subsp. infantis (strain ATCC 15697 / DSM 20088 / JCM 1222 / NCTC 11817 / S12), this protein is Glutamyl-tRNA(Gln) amidotransferase subunit A.